We begin with the raw amino-acid sequence, 1457 residues long: Receptor-type tyrosine-protein phosphatase kappa (1457 aa).

The first 25 residues, 1-25 (MDVAAAALPAFVALWLLYPWPLLGS), serve as a signal peptide directing secretion. The Extracellular portion of the chain corresponds to 26–752 (ALGQFSAGGC…PAKQTDRVVK (727 aa)). An MAM domain is found at 30–193 (FSAGGCTFDD…IQVLSYPCDK (164 aa)). N-linked (GlcNAc...) asparagine glycosylation is found at Asn100, Asn139, and Asn210. Positions 195-280 (PHFLRLGDVE…TQSERGSGVS (86 aa)) constitute an Ig-like C2-type domain. Cysteines 215 and 269 form a disulfide. Fibronectin type-III domains lie at 293–388 (PIAP…CAEP), 391–487 (TPKT…TDED), 490–594 (GPVP…SAPS), and 595–688 (LPDY…TVGD). N-linked (GlcNAc...) asparagine glycosylation is found at Asn415, Asn423, Asn435, Asn461, Asn551, Asn585, Asn589, Asn606, and Asn689. A helical membrane pass occupies residues 753–774 (IAGISAGILVFILLLLVVIVIV). At 775 to 1457 (KKSKLAKKRK…DVALEYLESS (683 aa)) the chain is on the cytoplasmic side. A Phosphoserine modification is found at Ser868. Tyrosine-protein phosphatase domains are found at residues 899–1159 (FKEE…ILEA) and 1191–1453 (LKDE…ALEY). Substrate-binding positions include Asp1068, 1100–1106 (CSAGAGR), and Gln1144. Cys1100 (phosphocysteine intermediate) is an active-site residue. Cys1394 serves as the catalytic Phosphocysteine intermediate.

The protein belongs to the protein-tyrosine phosphatase family. Receptor class 2B subfamily. In terms of processing, this protein undergoes proteolytic processing. As to expression, high levels in liver and kidney. Lower levels in lung, brain and heart. Not seen in spleen and testis.

It is found in the membrane. It carries out the reaction O-phospho-L-tyrosyl-[protein] + H2O = L-tyrosyl-[protein] + phosphate. In terms of biological role, regulation of processes involving cell contact and adhesion such as growth control, tumor invasion, and metastasis. Negative regulator of EGFR signaling pathway. Forms complexes with beta-catenin and gamma-catenin/plakoglobin. Beta-catenin may be a substrate for the catalytic activity of PTPRK/PTP-kappa. The sequence is that of Receptor-type tyrosine-protein phosphatase kappa (Ptprk) from Mus musculus (Mouse).